A 965-amino-acid chain; its full sequence is 26S proteasome non-ATPase regulatory subunit 1 (965 aa).

8 PC repeats span residues 380-413 (NAVA…EGFG), 418-452 (GAML…EPVR), 454-488 (GACL…VSGE), 489-523 (SAGI…DKTQ), 560-595 (TGIC…DVKR), 630-664 (GAAM…FVRK), 665-706 (GALL…SLVK), and 708-738 (GAII…DMGS). Residues 836–856 (ASASSAAAAPSSSSTSGTAPA) show a composition bias toward low complexity. 2 disordered regions span residues 836-889 (ASAS…LQNP) and 943-965 (TPAS…INDF). Residues 863-882 (EVDQPGKSKKEKAPEKDTKP) are compositionally biased toward basic and acidic residues.

The protein belongs to the proteasome subunit S1 family.

In terms of biological role, acts as a regulatory subunit of the 26 proteasome which is involved in the ATP-dependent degradation of ubiquitinated proteins. This chain is 26S proteasome non-ATPase regulatory subunit 1 (rpn-2), found in Caenorhabditis elegans.